Reading from the N-terminus, the 2460-residue chain is Reducing polyketide synthase BOA6 (2460 aa).

In terms of domain architecture, Ketosynthase family 3 (KS3) spans 5–438; that stretch reads NEPIAVIGTG…GTNAHAILES (434 aa). Residues Cys-178, His-317, and His-360 each act as for beta-ketoacyl synthase activity in the active site. Residues 549–864 are malonyl-CoA:ACP transacylase (MAT) domain; that stretch reads VFTGQGAQWP…PYTGVLSRGD (316 aa). An N-terminal hotdog fold region spans residues 938-1073; the sequence is HELLGVRCAD…GRIKMTLGTP (136 aa). The interval 938 to 1244 is dehydratase (DH) domain; sequence HELLGVRCAD…QMQSFTAARP (307 aa). One can recognise a PKS/mFAS DH domain in the interval 938-1245; the sequence is HELLGVRCAD…MQSFTAARPS (308 aa). The Proton acceptor; for dehydratase activity role is filled by His-970. Residues 1088–1245 are C-terminal hotdog fold; sequence LGPLNVDRFY…MQSFTAARPS (158 aa). Asp-1145 functions as the Proton donor; for dehydratase activity in the catalytic mechanism. Residues 1399 to 1586 form a methyltransferase (MT) domain region; it reads NKFVTAAMKK…VNDFKDKSRY (188 aa). A ketoreductase (KR) domain region spans residues 2098–2266; sequence SYLLAGLTGD…KRGGVASVIH (169 aa). Residues 2378 to 2456 form the Carrier domain; sequence DEVLGVMQKC…DLCELACEEY (79 aa). Ser-2416 bears the O-(pantetheine 4'-phosphoryl)serine mark.

It participates in polyketide biosynthesis. Reducing polyketide synthase; part of the gene cluster A that mediates the biosynthesis of botcinic acid and its botcinin derivatives, acetate-derived polyketides that contribute to virulence when combined with the sesquiterpene botrydial. Botcinic acid and its derivatives have been shown to induce chlorosis and necrosis during host plant infection, but also have antifungal activities. Two polyketide synthases, BOA6 and BOA9, are involved in the biosynthesis of botcinins. BOA6 mediates the formation of the per-methylated tetraketide core by condensation of four units of malonyl-CoA with one unit of acetyl-CoA, which would be methylated in activated methylene groups to yield a bicyclic acid intermediate that could then either be converted to botrylactone derivatives or lose the starter acetate unit through a retro-Claisen type C-C bond cleavage to yield botcinin derivatives. The second polyketide synthase, BOA9, is probably required for the biosynthesis of the tetraketide side chain of botcinins. The methyltransferase (MT) domain within BOA6 is probably responsible for the incorporation of four methyl groups. The trans-enoyl reductase BOA5 might take over the enoyl reductase function of BOA6 that misses an ER domain. The monooxygenases BOA2, BOA3 and BOA4 might be involved in further hydroxylations at C4, C5 and C8, whereas BOA7, close to BOA9, could potentially be involved in the hydroxylation at C4 in the side chain of botcinins. In Botryotinia fuckeliana (strain B05.10) (Noble rot fungus), this protein is Reducing polyketide synthase BOA6.